The following is a 159-amino-acid chain: Ecotin (159 aa).

A signal peptide spans 1–22 (MRPTPLSTILALTMAATAPAMA). A disulfide bond links C68 and C105.

It belongs to the protease inhibitor I11 (ecotin) family. In terms of assembly, homodimer.

It localises to the periplasm. Functionally, general inhibitor of family S1 serine proteases. This chain is Ecotin, found in Pseudomonas putida (strain W619).